The primary structure comprises 555 residues: Potassium-transporting ATPase potassium-binding subunit (555 aa).

The next 10 helical transmembrane spans lie at 2-22 (IWVA…PTGI), 60-80 (QYAL…YFIF), 130-150 (IGIT…VMAF), 173-193 (VFLP…VPQT), 246-266 (MSNI…PFTY), 278-298 (ILFV…TTSE), 374-394 (AGFV…GLMV), 412-432 (LIAV…ALAL), 483-503 (LVMF…AASL), and 525-545 (GIFI…MLVL).

It belongs to the KdpA family. As to quaternary structure, the system is composed of three essential subunits: KdpA, KdpB and KdpC.

The protein resides in the cell membrane. Functionally, part of the high-affinity ATP-driven potassium transport (or Kdp) system, which catalyzes the hydrolysis of ATP coupled with the electrogenic transport of potassium into the cytoplasm. This subunit binds the extracellular potassium ions and delivers the ions to the membrane domain of KdpB through an intramembrane tunnel. This is Potassium-transporting ATPase potassium-binding subunit from Bacillus thuringiensis (strain Al Hakam).